A 498-amino-acid chain; its full sequence is Cytochrome P450 monooxygenase ltmP (498 aa).

Positions 1–21 (MLMLHAVPVGICLLLWYVVYG) are cleaved as a signal peptide. N-linked (GlcNAc...) asparagine glycosylation occurs at asparagine 420. Cysteine 435 lines the heme pocket.

This sequence belongs to the cytochrome P450 family. Requires heme as cofactor.

The protein operates within secondary metabolite biosynthesis. Functionally, cytochrome P450 monooxygenase; part of the gene clusters that mediates the biosynthesis of lolitrems, indole-diterpene mycotoxins that are potent tremorgens in mammals, and are synthesized by clavicipitaceous fungal endophytes in association with their grass hosts. The geranylgeranyl diphosphate (GGPP) synthase ltmG is proposed to catalyze the first step in lolitrem biosynthesis. LtmG catalyzes a series of iterative condensations of isopentenyl diphosphate (IPP) with dimethylallyl diphosphate (DMAPP), geranyl diphosphate (GPP), and farnesyl diphosphate (FPP), to form GGPP. GGPP then condenses with indole-3-glycerol phosphate to form 3-geranylgeranylindole, an acyclic intermediate, to be incorporated into paxilline. Either ltmG or ltmC could be responsible for this step, as both are putative prenyl transferases. The FAD-dependent monooxygenase ltmM then catalyzes the epoxidation of the two terminal alkenes of the geranylgeranyl moiety, which is subsequently cyclized by ltmB, to paspaline. The cytochrome P450 monooxygenases ltmQ and ltmP can sequentially oxidize paspaline to terpendole E and terpendole F. Alternatively, ltmP converts paspaline to an intermediate which is oxidized by ltmQ to terpendole F. LtmF, ltmK, ltmE and ltmJ appear to be unique to the epichloe endophytes. The prenyltransferase ltmF is involved in the 27-hydroxyl-O-prenylation. The cytochrome P450 monooxygenase ltmK is required for the oxidative acetal ring formation. The multi-functional prenyltransferase ltmE is required for C20- and C21-prenylations of the indole ring of paspalanes and acts together with the cytochrome P450 monooxygenase ltmJ to yield lolitremanes by multiple oxidations and ring closures. The stereoisomer pairs of lolitriol and lolitrem N or lolitrem B and lolitrem F may be attributed to variations in the way in which ring closure can occur under the action of ltmJ. While the major product of this pathway is lolitrem B, the prenyl transferases and cytochrome P450 monooxygenases identified in this pathway have a remarkable versatility in their regio- and stereo-specificities to generate a diverse range of metabolites that are products of a metabolic grid rather than a linear pathway. In Epichloe festucae var. lolii (Neotyphodium lolii), this protein is Cytochrome P450 monooxygenase ltmP.